Here is a 405-residue protein sequence, read N- to C-terminus: Cysteine desulfurase IscS (405 aa).

Pyridoxal 5'-phosphate is bound by residues 75-76, asparagine 155, glutamine 183, and 203-205; these read AT and SGH. N6-(pyridoxal phosphate)lysine is present on lysine 206. Position 243 (threonine 243) interacts with pyridoxal 5'-phosphate. Cysteine 329 acts as the Cysteine persulfide intermediate in catalysis. Cysteine 329 is a [2Fe-2S] cluster binding site.

Belongs to the class-V pyridoxal-phosphate-dependent aminotransferase family. NifS/IscS subfamily. Homodimer. Forms a heterotetramer with IscU, interacts with other sulfur acceptors. Pyridoxal 5'-phosphate serves as cofactor.

It is found in the cytoplasm. The enzyme catalyses (sulfur carrier)-H + L-cysteine = (sulfur carrier)-SH + L-alanine. Its pathway is cofactor biosynthesis; iron-sulfur cluster biosynthesis. In terms of biological role, master enzyme that delivers sulfur to a number of partners involved in Fe-S cluster assembly, tRNA modification or cofactor biosynthesis. Catalyzes the removal of elemental sulfur atoms from cysteine to produce alanine. Functions as a sulfur delivery protein for Fe-S cluster synthesis onto IscU, an Fe-S scaffold assembly protein, as well as other S acceptor proteins. This chain is Cysteine desulfurase IscS, found in Pseudoalteromonas translucida (strain TAC 125).